Here is a 274-residue protein sequence, read N- to C-terminus: MSQVVHTRRLQAVDLIKRKAEGRKIIALTAYHAHTANIVDSYCDFVLVGDSLGMVMHGMESTLPVTLEMMILQAQAVMRGTARALVVVDMPFGSYEASREQAFLNAARVLKETGAGAVKLEGGARFAETVAFLTERGVPVMGHIGLTPQSVNTMGGFKVQGHGAGDEDRLRADARAISEAGAFAIVMEGIVEPVARAIATDPSIRAATIGIGATAACDGQILVLEDMLGLSDRVPKFVKSYGSLRAHIEEAVRAYADEVQAGRFPADGHTYPPR.

Residues Asp-50 and Asp-89 each contribute to the Mg(2+) site. 3-methyl-2-oxobutanoate-binding positions include 50 to 51 (DS), Asp-89, and Lys-119. Glu-121 is a binding site for Mg(2+). Residue Glu-188 is the Proton acceptor of the active site.

The protein belongs to the PanB family. In terms of assembly, homodecamer; pentamer of dimers. Requires Mg(2+) as cofactor.

The protein resides in the cytoplasm. The catalysed reaction is 3-methyl-2-oxobutanoate + (6R)-5,10-methylene-5,6,7,8-tetrahydrofolate + H2O = 2-dehydropantoate + (6S)-5,6,7,8-tetrahydrofolate. The protein operates within cofactor biosynthesis; (R)-pantothenate biosynthesis; (R)-pantoate from 3-methyl-2-oxobutanoate: step 1/2. Its function is as follows. Catalyzes the reversible reaction in which hydroxymethyl group from 5,10-methylenetetrahydrofolate is transferred onto alpha-ketoisovalerate to form ketopantoate. The polypeptide is 3-methyl-2-oxobutanoate hydroxymethyltransferase (Methylorubrum populi (strain ATCC BAA-705 / NCIMB 13946 / BJ001) (Methylobacterium populi)).